Consider the following 40-residue polypeptide: ASGSDENDVVVIGGGPGGYVAAIKAAQLGLKTTXIEKRGT.

36–40 provides a ligand contact to FAD; it reads EKRGT.

This sequence belongs to the class-I pyridine nucleotide-disulfide oxidoreductase family. As to quaternary structure, homodimer. FAD is required as a cofactor.

Its subcellular location is the mitochondrion matrix. The enzyme catalyses N(6)-[(R)-dihydrolipoyl]-L-lysyl-[protein] + NAD(+) = N(6)-[(R)-lipoyl]-L-lysyl-[protein] + NADH + H(+). Lipoamide dehydrogenase is a component of the glycine cleavage system as well as of the alpha-ketoacid dehydrogenase complexes. The pyruvate dehydrogenase complex contains multiple copies of three enzymatic components: pyruvate dehydrogenase (E1), dihydrolipoamide acetyltransferase (E2) and lipoamide dehydrogenase (E3). This chain is Dihydrolipoyl dehydrogenase, found in Solanum tuberosum (Potato).